The sequence spans 297 residues: Retroviral cyclin (297 aa).

Residues P21–M113 form the Cyclin N-terminal domain. Residues P21–M113 form a transcription activation domain region. A coiled-coil region spans residues Q222–I270.

The protein belongs to the cyclin family. Interacts (via transcription activation domain) with host TAF9 in vitro. Interacts with host CDK3 and CDK8.

Its subcellular location is the host nucleus. In terms of biological role, transforming protein which induces the development of dermal sarcomas. Induces positive and negative regulation of transcription from host and viral promoters by interacting with various cellular factors involved in protein transcription regulation. This chain is Retroviral cyclin (orfA), found in Sander vitreus (Walleye).